We begin with the raw amino-acid sequence, 433 residues long: Serine hydroxymethyltransferase (433 aa).

Residues L131 and 135-137 each bind (6S)-5,6,7,8-tetrahydrofolate; that span reads GHL. K240 bears the N6-(pyridoxal phosphate)lysine mark.

Belongs to the SHMT family. As to quaternary structure, homodimer. The cofactor is pyridoxal 5'-phosphate.

It is found in the cytoplasm. The catalysed reaction is (6R)-5,10-methylene-5,6,7,8-tetrahydrofolate + glycine + H2O = (6S)-5,6,7,8-tetrahydrofolate + L-serine. The protein operates within one-carbon metabolism; tetrahydrofolate interconversion. It functions in the pathway amino-acid biosynthesis; glycine biosynthesis; glycine from L-serine: step 1/1. Its function is as follows. Catalyzes the reversible interconversion of serine and glycine with tetrahydrofolate (THF) serving as the one-carbon carrier. This reaction serves as the major source of one-carbon groups required for the biosynthesis of purines, thymidylate, methionine, and other important biomolecules. Also exhibits THF-independent aldolase activity toward beta-hydroxyamino acids, producing glycine and aldehydes, via a retro-aldol mechanism. This is Serine hydroxymethyltransferase from Bifidobacterium adolescentis (strain ATCC 15703 / DSM 20083 / NCTC 11814 / E194a).